The chain runs to 616 residues: Chaperone protein HtpG (616 aa).

The tract at residues 1-333 (MKKQFDTEVN…CQDLPLNVSR (333 aa)) is a; substrate-binding. The b stretch occupies residues 334 to 542 (EILQQNKILS…SNDPTYQMQK (209 aa)). The tract at residues 543–616 (IMLSMGQEVK…INEFIEKDFL (74 aa)) is c.

The protein belongs to the heat shock protein 90 family. Homodimer.

The protein localises to the cytoplasm. In terms of biological role, molecular chaperone. Has ATPase activity. In Borreliella burgdorferi (strain ATCC 35210 / DSM 4680 / CIP 102532 / B31) (Borrelia burgdorferi), this protein is Chaperone protein HtpG.